Reading from the N-terminus, the 203-residue chain is ATP-dependent Clp protease proteolytic subunit (203 aa).

The Nucleophile role is filled by Ser-107. His-132 is a catalytic residue.

This sequence belongs to the peptidase S14 family. Fourteen ClpP subunits assemble into 2 heptameric rings which stack back to back to give a disk-like structure with a central cavity, resembling the structure of eukaryotic proteasomes.

Its subcellular location is the cytoplasm. The catalysed reaction is Hydrolysis of proteins to small peptides in the presence of ATP and magnesium. alpha-casein is the usual test substrate. In the absence of ATP, only oligopeptides shorter than five residues are hydrolyzed (such as succinyl-Leu-Tyr-|-NHMec, and Leu-Tyr-Leu-|-Tyr-Trp, in which cleavage of the -Tyr-|-Leu- and -Tyr-|-Trp bonds also occurs).. Cleaves peptides in various proteins in a process that requires ATP hydrolysis. Has a chymotrypsin-like activity. Plays a major role in the degradation of misfolded proteins. This Shewanella pealeana (strain ATCC 700345 / ANG-SQ1) protein is ATP-dependent Clp protease proteolytic subunit.